Consider the following 97-residue polypeptide: Aspartyl/glutamyl-tRNA(Asn/Gln) amidotransferase subunit C (97 aa).

The span at 74–84 shows a compositional bias: low complexity; the sequence is TPEEATAAAPA. Positions 74–97 are disordered; it reads TPEEATAAAPAREGTAFKVPRIIE.

The protein belongs to the GatC family. As to quaternary structure, heterotrimer of A, B and C subunits.

It carries out the reaction L-glutamyl-tRNA(Gln) + L-glutamine + ATP + H2O = L-glutaminyl-tRNA(Gln) + L-glutamate + ADP + phosphate + H(+). The enzyme catalyses L-aspartyl-tRNA(Asn) + L-glutamine + ATP + H2O = L-asparaginyl-tRNA(Asn) + L-glutamate + ADP + phosphate + 2 H(+). Functionally, allows the formation of correctly charged Asn-tRNA(Asn) or Gln-tRNA(Gln) through the transamidation of misacylated Asp-tRNA(Asn) or Glu-tRNA(Gln) in organisms which lack either or both of asparaginyl-tRNA or glutaminyl-tRNA synthetases. The reaction takes place in the presence of glutamine and ATP through an activated phospho-Asp-tRNA(Asn) or phospho-Glu-tRNA(Gln). The protein is Aspartyl/glutamyl-tRNA(Asn/Gln) amidotransferase subunit C of Anaeromyxobacter dehalogenans (strain 2CP-1 / ATCC BAA-258).